Consider the following 235-residue polypeptide: Vinculin (235 aa).

The protein belongs to the vinculin/alpha-catenin family. As to quaternary structure, exhibits self-association properties. Post-translationally, phosphorylated on serines, threonines and tyrosines. In terms of processing, acetylated by myristic acid and/or palmitic acid.

It is found in the cell membrane. The protein localises to the cell junction. Its subcellular location is the adherens junction. It localises to the focal adhesion. The protein resides in the cytoplasm. It is found in the cytoskeleton. The protein localises to the sarcolemma. Its subcellular location is the cell projection. It localises to the podosome. Its function is as follows. Involved in cell adhesion. May be involved in the attachment of the actin-based microfilaments to the plasma membrane. This Xenopus laevis (African clawed frog) protein is Vinculin (vcl).